Here is a 369-residue protein sequence, read N- to C-terminus: tRNA(Met) cytidine acetate ligase (369 aa).

ATP contacts are provided by residues 7 to 20 (VAEF…HKYL), Gly96, Asn152, and Arg175.

The protein belongs to the TmcAL family.

It is found in the cytoplasm. The catalysed reaction is cytidine(34) in elongator tRNA(Met) + acetate + ATP = N(4)-acetylcytidine(34) in elongator tRNA(Met) + AMP + diphosphate. In terms of biological role, catalyzes the formation of N(4)-acetylcytidine (ac(4)C) at the wobble position of elongator tRNA(Met), using acetate and ATP as substrates. First activates an acetate ion to form acetyladenylate (Ac-AMP) and then transfers the acetyl group to tRNA to form ac(4)C34. This chain is tRNA(Met) cytidine acetate ligase, found in Streptococcus agalactiae serotype Ia (strain ATCC 27591 / A909 / CDC SS700).